The following is a 540-amino-acid chain: Glucose-6-phosphate isomerase (540 aa).

Residue glutamate 350 is the Proton donor of the active site. Catalysis depends on residues histidine 381 and lysine 503.

The protein belongs to the GPI family.

The protein resides in the cytoplasm. It catalyses the reaction alpha-D-glucose 6-phosphate = beta-D-fructose 6-phosphate. The protein operates within carbohydrate biosynthesis; gluconeogenesis. It participates in carbohydrate degradation; glycolysis; D-glyceraldehyde 3-phosphate and glycerone phosphate from D-glucose: step 2/4. In terms of biological role, catalyzes the reversible isomerization of glucose-6-phosphate to fructose-6-phosphate. This chain is Glucose-6-phosphate isomerase, found in Paraburkholderia phytofirmans (strain DSM 17436 / LMG 22146 / PsJN) (Burkholderia phytofirmans).